The following is a 428-amino-acid chain: Putative UPF0496 protein 5 (428 aa).

The segment covering 1–14 has biased composition (basic residues); sequence MGNRHGIMRPRRLA. The tract at residues 1–40 is disordered; the sequence is MGNRHGIMRPRRLASGRSAAAAEEEGEDGEGEPGSYEAAC. A compositionally biased stretch (acidic residues) spans 22 to 31; that stretch reads AEEEGEDGEG. Helical transmembrane passes span 229 to 249 and 252 to 272; these read IVFL…AAIA and PVAA…GKWM.

It belongs to the UPF0496 family.

The protein resides in the membrane. This chain is Putative UPF0496 protein 5, found in Oryza sativa subsp. indica (Rice).